A 323-amino-acid polypeptide reads, in one-letter code: Aldo-keto reductase family 1 member C18 (323 aa).

Residues Gly20–Tyr24 and Asp50 each bind NADP(+). Tyr55 acts as the Proton donor in catalysis. His117 is a substrate binding site. Residues Ser166–Asn167, Gln190, Tyr216–Thr221, and Lys270–Asn280 contribute to the NADP(+) site.

The protein belongs to the aldo/keto reductase family. As to quaternary structure, monomer.

The protein localises to the cytoplasm. It carries out the reaction (17R,20S)-17,20-dihydroxypregn-4-en-3-one + NADP(+) = 17alpha-hydroxyprogesterone + NADPH + H(+). The catalysed reaction is (17R,20S)-17,20-dihydroxypregn-4-en-3-one + NAD(+) = 17alpha-hydroxyprogesterone + NADH + H(+). Functionally, catalyzes the conversion of progesterone into 20-alpha-dihydroprogesterone (20 alpha-OHP). The polypeptide is Aldo-keto reductase family 1 member C18 (Akr1c18) (Mus musculus (Mouse)).